The following is a 635-amino-acid chain: Probable extracellular metalloproteinase 1 (635 aa).

An N-terminal signal peptide occupies residues 1-19 (MHGLLLAAGLLSLPLHVLA). The propeptide occupies 20–246 (HPQPSTSTSL…VHNVVDYVAH (227 aa)). N287 is a glycosylation site (N-linked (GlcNAc...) asparagine). Zn(2+) is bound at residue H430. The active site involves E431. Residue H434 participates in Zn(2+) binding. N-linked (GlcNAc...) asparagine glycans are attached at residues N475, N594, and N623.

Belongs to the peptidase M36 family. Requires Zn(2+) as cofactor.

Its subcellular location is the secreted. Functionally, secreted metalloproteinase probably acting as a virulence factor. This Trichophyton verrucosum (strain HKI 0517) protein is Probable extracellular metalloproteinase 1 (MEP1).